An 822-amino-acid chain; its full sequence is Nose resistant to fluoxetine protein 6 (822 aa).

The N-terminal stretch at 1–24 (MGNMRRLLIFAVLVILTVISNSKS) is a signal peptide. N-linked (GlcNAc...) asparagine glycosylation occurs at N236. Transmembrane regions (helical) follow at residues 306-326 (LAMF…FGTL), 617-637 (PYIR…LNAW), and 655-675 (IICW…LYWF).

The protein belongs to the acyltransferase 3 family. In terms of tissue distribution, in L1 larvae through to adult, hyp3 and hyp5, the most anterior cells in the hypodermis, and in intestine. Other hypodermal cells show weaker expression.

The protein localises to the membrane. In terms of biological role, plays a role in the uptake of a range of molecules including lipids and xenobiotic compounds from the intestine to surrounding tissues. Mediates transport of lipids from intestine to the reproductive tract. Required for efficient yolk transport into oocytes. Vital for embryonic development. The sequence is that of Nose resistant to fluoxetine protein 6 (nrf-6) from Caenorhabditis elegans.